The sequence spans 327 residues: Acetaldehyde dehydrogenase 6 (327 aa).

15-18 (SGNI) serves as a coordination point for NAD(+). The active-site Acyl-thioester intermediate is C133. Residues 164–172 (SAGPGTRAN) and N297 each bind NAD(+).

It belongs to the acetaldehyde dehydrogenase family.

It catalyses the reaction acetaldehyde + NAD(+) + CoA = acetyl-CoA + NADH + H(+). The chain is Acetaldehyde dehydrogenase 6 from Rhodococcus opacus (strain B4).